A 271-amino-acid polypeptide reads, in one-letter code: Glutamate racemase (271 aa).

Substrate-binding positions include 10 to 11 (DS) and 42 to 43 (YG). The active-site Proton donor/acceptor is Cys73. 74-75 (NT) is a binding site for substrate. Cys183 acts as the Proton donor/acceptor in catalysis. Position 184 to 185 (184 to 185 (TH)) interacts with substrate.

The protein belongs to the aspartate/glutamate racemases family.

The enzyme catalyses L-glutamate = D-glutamate. The protein operates within cell wall biogenesis; peptidoglycan biosynthesis. Provides the (R)-glutamate required for cell wall biosynthesis. In Lactococcus lactis subsp. cremoris (strain MG1363), this protein is Glutamate racemase.